Here is a 139-residue protein sequence, read N- to C-terminus: Putative pre-16S rRNA nuclease (139 aa).

The protein belongs to the YqgF nuclease family.

It localises to the cytoplasm. Could be a nuclease involved in processing of the 5'-end of pre-16S rRNA. This chain is Putative pre-16S rRNA nuclease, found in Streptococcus pyogenes serotype M2 (strain MGAS10270).